A 153-amino-acid chain; its full sequence is NADPH-dependent 7-cyano-7-deazaguanine reductase (153 aa).

Polar residues predominate over residues 1–17 (MTDTRNLTQLGSKTQAP). Positions 1-23 (MTDTRNLTQLGSKTQAPASPEAA) are disordered. Catalysis depends on cysteine 51, which acts as the Thioimide intermediate. The active-site Proton donor is the aspartate 58. Residues 73 to 75 (VES) and 92 to 93 (HE) each bind substrate.

This sequence belongs to the GTP cyclohydrolase I family. QueF type 1 subfamily.

The protein localises to the cytoplasm. It carries out the reaction 7-aminomethyl-7-carbaguanine + 2 NADP(+) = 7-cyano-7-deazaguanine + 2 NADPH + 3 H(+). The protein operates within tRNA modification; tRNA-queuosine biosynthesis. Catalyzes the NADPH-dependent reduction of 7-cyano-7-deazaguanine (preQ0) to 7-aminomethyl-7-deazaguanine (preQ1). The polypeptide is NADPH-dependent 7-cyano-7-deazaguanine reductase (Chelativorans sp. (strain BNC1)).